The primary structure comprises 263 residues: Ribosomal RNA small subunit methyltransferase A (263 aa).

S-adenosyl-L-methionine is bound by residues asparagine 20, leucine 22, glycine 47, glutamate 68, aspartate 90, and asparagine 110.

It belongs to the class I-like SAM-binding methyltransferase superfamily. rRNA adenine N(6)-methyltransferase family. RsmA subfamily.

The protein localises to the cytoplasm. The catalysed reaction is adenosine(1518)/adenosine(1519) in 16S rRNA + 4 S-adenosyl-L-methionine = N(6)-dimethyladenosine(1518)/N(6)-dimethyladenosine(1519) in 16S rRNA + 4 S-adenosyl-L-homocysteine + 4 H(+). Its function is as follows. Specifically dimethylates two adjacent adenosines (A1518 and A1519) in the loop of a conserved hairpin near the 3'-end of 16S rRNA in the 30S particle. May play a critical role in biogenesis of 30S subunits. The chain is Ribosomal RNA small subunit methyltransferase A from Chlorobium limicola (strain DSM 245 / NBRC 103803 / 6330).